We begin with the raw amino-acid sequence, 246 residues long: UDP-N-acetyl-D-mannosaminuronic acid transferase (246 aa).

The protein belongs to the glycosyltransferase 26 family.

The catalysed reaction is UDP-N-acetyl-alpha-D-mannosaminouronate + N-acetyl-alpha-D-glucosaminyl-di-trans,octa-cis-undecaprenyl diphosphate = beta-D-ManNAcA-(1-&gt;4)-alpha-D-GlcNAc-di-trans,octa-cis-undecaprenyl diphosphate + UDP + H(+). Its pathway is bacterial outer membrane biogenesis; enterobacterial common antigen biosynthesis. In terms of biological role, catalyzes the synthesis of Und-PP-GlcNAc-ManNAcA (Lipid II), the second lipid-linked intermediate involved in enterobacterial common antigen (ECA) synthesis. This chain is UDP-N-acetyl-D-mannosaminuronic acid transferase, found in Salmonella paratyphi A (strain ATCC 9150 / SARB42).